Reading from the N-terminus, the 393-residue chain is DNA/RNA-binding protein KIN17 (393 aa).

Residues 28-50 (CQMCQKQCRDENGFKCHCMSESH) form a C2H2-type zinc finger. The winged helix-turn-helix (wHTH) stretch occupies residues 51–160 (QRQLLLASEN…RQLELEKKKK (110 aa)). Residue Lys-135 is modified to N6,N6,N6-trimethyllysine; by METTL22; in vitro. Residue Lys-135 is modified to N6-methyllysine. Residues 147–180 (ETIRRQLELEKKKKQDLDDEEKTAKFIEEQVRRG) adopt a coiled-coil conformation. Residues 209 to 224 (KGACSSSGATSSKSST) show a composition bias toward low complexity. The interval 209 to 260 (KGACSSSGATSSKSSTLGPSALKTIGSSASVKRKESSQSSTQSKEKKKKKSA) is disordered. The stretch at 250 to 277 (QSKEKKKKKSALDEIMEIEEEKKRTART) forms a coiled coil. A C-terminal subdomain A region spans residues 284 to 334 (EIIVKIITKKLGEKYHKKKAIVKEVIDKYTAVVKMIDSGDKLKLDQTHLET). Residues 340 to 391 (GKRILVLNGGYRGNEGTLESINEKTFSATIVIETGPLKGRRVEGIQYEDISK) form a C-terminal subdomain B region.

Belongs to the KIN17 family. Associated with DNA polymerase alpha, RFC1 and cyclin A, in multiprotein DNA replication complexes. Also associates with replication origins at the G1/S phase boundary and throughout the S phase in vivo. In terms of assembly, (Microbial infection) Interacts with SV40 large T antigen. Ubiquitously expressed in all tissues examined, with highest levels in skeletal muscle, heart and testis. Differentially expressed in non-tumorigenic and tumorigenic cell lines. Highly expressed in proliferating epithelial keratinocyte cells in vitro (at protein level).

Its subcellular location is the nucleus. The protein resides in the cytoplasm. Functionally, involved in DNA replication and the cellular response to DNA damage. May participate in DNA replication factories and create a bridge between DNA replication and repair mediated by high molecular weight complexes. May play a role in illegitimate recombination and regulation of gene expression. May participate in mRNA processing. Binds, in vitro, to double-stranded DNA. Also shown to bind preferentially to curved DNA in vitro and in vivo. Binds via its C-terminal domain to RNA in vitro. This Homo sapiens (Human) protein is DNA/RNA-binding protein KIN17.